A 56-amino-acid polypeptide reads, in one-letter code: MAKADYNKRKPRKFGKGARRCMRCGQYGPIIRIHGLMLCRHCFREVAPKLGFKKYE.

Zn(2+) is bound by residues C21, C24, C39, and C42.

Belongs to the universal ribosomal protein uS14 family. Zinc-binding uS14 subfamily. Part of the 30S ribosomal subunit. The cofactor is Zn(2+).

In terms of biological role, binds 16S rRNA, required for the assembly of 30S particles. The protein is Small ribosomal subunit protein uS14 of Thermococcus kodakarensis (strain ATCC BAA-918 / JCM 12380 / KOD1) (Pyrococcus kodakaraensis (strain KOD1)).